Consider the following 478-residue polypeptide: Lysosome membrane protein 2 (478 aa).

The Cytoplasmic portion of the chain corresponds to 2-4; the sequence is ARC. Residues 5–27 traverse the membrane as a helical segment; that stretch reads CFYTAGTLSLLLLVTSVTLLVAR. Residues 28–433 are Lumenal-facing; that stretch reads VFQKAVDQTI…QLKSVINTTL (406 aa). N-linked (GlcNAc...) asparagine glycosylation is found at Asn-45, Asn-68, Asn-105, and Asn-122. Positions 155 to 191 are important for interaction with GBA1; that stretch reads IIEAMLKAYQQTLFVTHTVHELLWGYKDEVLSLVHIF. Asn-206, Asn-224, Asn-249, and Asn-304 each carry an N-linked (GlcNAc...) asparagine glycan. 2 disulfide bridges follow: Cys-274–Cys-329 and Cys-312–Cys-318. N-linked (GlcNAc...) asparagine glycans are attached at residues Asn-325, Asn-412, and Asn-430. A helical transmembrane segment spans residues 434-459; sequence IVTNIPYIIMALGVFFGLIFTWLACR. Over 460–478 the chain is Cytoplasmic; that stretch reads GQGSTDEGTADERAPLIRT.

Belongs to the CD36 family. As to quaternary structure, interacts with GBA1. Acylated by palmitic acid group(s).

The protein localises to the lysosome membrane. Functionally, acts as a lysosomal receptor for glucosylceramidase (GBA1) targeting. This chain is Lysosome membrane protein 2 (Scarb2), found in Rattus norvegicus (Rat).